The primary structure comprises 409 residues: SPI-1 type 3 secretion system translocon protein SctB (409 aa).

A helical transmembrane segment spans residues 119-140; that stretch reads ISGMSSSAVALLAAANTLMLTL.

Belongs to the SctB/SipC family. The core secretion machinery of the T3SS is composed of approximately 20 different proteins, including cytoplasmic components, a base, an export apparatus and a needle. This subunit is involved in the formation of a pore, called the translocon, in host membrane.

It is found in the secreted. Its subcellular location is the host membrane. Its function is as follows. Component of the type III secretion system 1 (SPI-1 T3SS), also called injectisome, which is used to inject bacterial effector proteins into eukaryotic host cells. SipB/SctE1 and SipC/SctB1 are inserted into the host membrane where they form a pore and allow the translocation of effector proteins into the cytosol of target cells. The chain is SPI-1 type 3 secretion system translocon protein SctB from Salmonella typhimurium (strain 14028s / SGSC 2262).